The chain runs to 381 residues: Cytochrome b (381 aa).

A run of 4 helical transmembrane segments spans residues 33-53, 77-98, 113-133, and 178-198; these read FGSLLGMCLIIQILTGLFLAM, WLLRNLHANGASMFFMCLFLHV, WNIGVILLLTVMATAFVGYVL, and FFAFHFILPFIIMALAVVHLL. His83 and His97 together coordinate heme b. 2 residues coordinate heme b: His182 and His196. His201 is an a ubiquinone binding site. A run of 4 helical transmembrane segments spans residues 226-246, 288-308, 320-340, and 347-367; these read IKDALGFMLLLLVLLLLALFS, LGGVLAVLASILILLIIPLLH, VSQTLFWILTANLITLTWIGG, and FIIIGQLAPMPYFLLILVMMP.

Belongs to the cytochrome b family. In terms of assembly, the cytochrome bc1 complex contains 11 subunits: 3 respiratory subunits (MT-CYB, CYC1 and UQCRFS1), 2 core proteins (UQCRC1 and UQCRC2) and 6 low-molecular weight proteins (UQCRH/QCR6, UQCRB/QCR7, UQCRQ/QCR8, UQCR10/QCR9, UQCR11/QCR10 and a cleavage product of UQCRFS1). This cytochrome bc1 complex then forms a dimer. Requires heme b as cofactor.

The protein resides in the mitochondrion inner membrane. Its function is as follows. Component of the ubiquinol-cytochrome c reductase complex (complex III or cytochrome b-c1 complex) that is part of the mitochondrial respiratory chain. The b-c1 complex mediates electron transfer from ubiquinol to cytochrome c. Contributes to the generation of a proton gradient across the mitochondrial membrane that is then used for ATP synthesis. The protein is Cytochrome b (MT-CYB) of Dasyurus hallucatus (Northern quoll).